Here is a 2181-residue protein sequence, read N- to C-terminus: Non-reducing polyketide synthase subA (2181 aa).

Residues 74-180 form an N-terminal acylcarrier protein transacylase domain (SAT) region; the sequence is QWVKGNSTQP…LALCCGAYID (107 aa). The Ketosynthase family 3 (KS3) domain maps to 347 to 779; it reads QAQLLVLGPV…GTNAAMLVCQ (433 aa). Active-site for beta-ketoacyl synthase activity residues include cysteine 525, histidine 661, and histidine 702. The interval 891 to 1193 is malonyl-CoA:ACP transacylase (MAT) domain; sequence VLAGQTGRRV…SFYPAALGEP (303 aa). Serine 977 serves as the catalytic For acyl/malonyl transferase activity. The tract at residues 1269–1401 is N-terminal hotdog fold; the sequence is VSLIGKTQNA…GVITLQEVYS (133 aa). In terms of domain architecture, PKS/mFAS DH spans 1269–1579; that stretch reads VSLIGKTQNA…FQKIAISSLK (311 aa). The tract at residues 1276-1573 is product template (PT) domain; that stretch reads QNAGVQTVEY…TILGAKFQKI (298 aa). Residues 1425–1579 are C-terminal hotdog fold; sequence SASVVQGDFI…FQKIAISSLK (155 aa). A disordered region spans residues 1652 to 1673; that stretch reads ISGSSRSTSSSPPSLESRSQAM. The segment covering 1653–1670 has biased composition (low complexity); the sequence is SGSSRSTSSSPPSLESRS. Positions 1677-1753 constitute a Carrier domain; it reads EITEGAGSAL…TLFHTIFPQQ (77 aa). O-(pantetheine 4'-phosphoryl)serine is present on serine 1713. The interval 1982–2164 is methyltransferase (CMeT) domain; it reads EFMNCLFSYN…QSGFGHVDWT (183 aa).

It functions in the pathway secondary metabolite biosynthesis; terpenoid biosynthesis. In terms of biological role, non-reducing polyketide synthase; part of the gene cluster that mediates the biosynthesis of the immunosuppressants subglutinols, meroterpenoids consisting of an alpha-pyrone (4-hydroxy-5,6-dimethyl-2-pyrone) moiety attached to a decalin core fused to a five-membered cyclic ether carrying a prenylside chain. The first step of the pathway is the synthesis of the alpha-pyrone moiety by the polyketide synthase subA via condensation of one acetyl-CoA starter unit with 3 malonyl-CoA units and 2 methylations. The alpha-pyrone is then combined with geranylgeranyl pyrophosphate (GGPP) formed by the GGPP synthase subD through the action of the prenyltransferase subC to yield a linear alpha-pyrone diterpenoid. Subsequent steps in the subglutinol biosynthetic pathway involve the decalin core formation, which is thought to be initiated by the epoxidation of the C10-C11 olefin by the FAD-dependent oxidoreductase subE. The following cyclization cascade would be catalyzed by the terpene cyclase subB. Lastly, the FAD-dependent dehydrogenase subF probably catalyzes the five-membered cyclic ether formation to complete the formation of subglutinol A. Subsequent redox reactions appear to give rise to subglutinol C and D, however, it remains unclear which enzymes are responsible for these transformations. SubD may have secondary function in the conversion of the identified subglutinols to subglutinol analog 45, which seems to be the major product of the cluster. This chain is Non-reducing polyketide synthase subA, found in Metarhizium robertsii (strain ARSEF 23 / ATCC MYA-3075) (Metarhizium anisopliae (strain ARSEF 23)).